The primary structure comprises 628 residues: MGKIIGIDLGTTNSCVAVMEGGKPVVIANAEGLRTTPSVVAFSKTGERLVGDPAKRQAVTNADKTISSIKRHMGTDYKVEIDGKKYTPQEISAMILQKLKSDAENYLGEKVTEAVITVPAYFNDAQRQATKDAGKIAGLDVKRIINEPTAAALAYGLDNEHEQKIMVYDLGGGTFDVSIIEIGDGVIEVLATAGNNKLGGDDFDNAVTQYMLNDFKAKEGVDLSKDTMALQRLKEAAEKAKKELSSTTQTEINLPYITATAEGPKHFEMTLTRAKFDELTHDLVEKTAEPVKNALSDAGLTASELSKVLLVGGSTRIPAVQDKVKSLTGHEPSKTLNPDECVAIGASIQGGKLAGDAGAGDILLLDVTPLSLSIETMGGIATRLIERNTTIPTKKSQIFSTAADNQTAVDINVVQGERQFARDNKSLGQFRLDGIPPARRGVPQIEVTFDIDANGIVNVSAKDLGTGKEQHITITAGSNMSDEDIDKAVKEAAEFEAQDKKRKDAIDARNEADSMVFQTQKAMDEAGDKLDASDKAAVETDLNALKALVDGSDPENMTDAQVDEIKAAKEKLMESAQKLFAKLYESQQAAGGAGPDMGAGAGPDMGAGASNGSAPYGDDVVDGDYKEV.

A Phosphothreonine; by autocatalysis modification is found at threonine 174. Residues 589-628 (AAGGAGPDMGAGAGPDMGAGASNGSAPYGDDVVDGDYKEV) are disordered. Residues 591–605 (GGAGPDMGAGAGPDM) show a composition bias toward gly residues.

This sequence belongs to the heat shock protein 70 family.

In terms of biological role, acts as a chaperone. The sequence is that of Chaperone protein DnaK from Lachnospira eligens (strain ATCC 27750 / DSM 3376 / VPI C15-48 / C15-B4) (Eubacterium eligens).